We begin with the raw amino-acid sequence, 537 residues long: Tyrosine-protein kinase Fyn (537 aa).

The N-myristoyl glycine moiety is linked to residue Gly2. S-palmitoyl cysteine attachment occurs at residues Cys3 and Cys6. Residues 14–35 (LTEERDGSLNQSSGYRYGTDPT) are disordered. 2 positions are modified to phosphoserine: Ser21 and Ser26. One can recognise an SH3 domain in the interval 82-143 (TGVTLFVALY…PSNYVAPVDS (62 aa)). One can recognise an SH2 domain in the interval 149 to 246 (WYFGKLGRKD…GLCCRLVVPC (98 aa)). The residue at position 185 (Tyr185) is a Phosphotyrosine. The 254-residue stretch at 271-524 (LQLIKRLGNG…YLQGFLEDYF (254 aa)) folds into the Protein kinase domain. ATP contacts are provided by residues 277-285 (LGNGQFGEV) and Lys299. Asp390 serves as the catalytic Proton acceptor. Tyr420 carries the phosphotyrosine; by autocatalysis modification. At Tyr531 the chain carries Phosphotyrosine.

This sequence belongs to the protein kinase superfamily. Tyr protein kinase family. SRC subfamily. In terms of assembly, interacts (via its SH3 domain) with PIK3R1 and PRMT8. Interacts with FYB1, PAG1, and SH2D1A. Interacts with CD79A (tyrosine-phosphorylated form); the interaction increases FYN activity. Interacts (via SH2 domain) with CSF1R (tyrosine phosphorylated). Interacts with TOM1L1 (phosphorylated form). Interacts with KDR (tyrosine phosphorylated). Interacts (via SH3 domain) with KLHL2 (via N-terminus). Interacts with SH2D1A and SLAMF1. Interacts with ITCH; the interaction phosphorylates ITCH and negatively regulates its activity. Interacts with FASLG. Interacts with RUNX3. Interacts with KIT. Interacts with EPHA8; possible downstream effector of EPHA8 in regulation of cell adhesion. Interacts with PTK2/FAK1; this interaction leads to PTK2/FAK1 phosphorylation and activation. Interacts with CAV1; this interaction couples integrins to the Ras-ERK pathway. Interacts with UNC119. Interacts (via SH2 domain) with PTPRH (phosphorylated form). Interacts with PTPRO (phosphorylated form). Interacts with PTPRB (phosphorylated form). Interacts with FYB2. Interacts with DSCAM. Interacts with SKAP1 and FYB1; this interaction promotes the phosphorylation of CLNK. Interacts with NEDD9; in the presence of PTK2. The cofactor is Mn(2+). Autophosphorylated at Tyr-420. Phosphorylation on the C-terminal tail at Tyr-531 by CSK maintains the enzyme in an inactive state. PTPRC/CD45 dephosphorylates Tyr-531 leading to activation. Dephosphorylation at Tyr-420 by PTPN2 negatively regulates T-cell receptor signaling. Phosphorylated at tyrosine residues, which can be enhanced by NTN1. In terms of processing, palmitoylated. Palmitoylation at Cys-3 and Cys-6, probably by ZDHHC21, regulates subcellular location. In terms of tissue distribution, detected in spinal cord oligodendrocytes (at protein level).

It is found in the cytoplasm. The protein localises to the nucleus. The protein resides in the cell membrane. It localises to the perikaryon. It carries out the reaction L-tyrosyl-[protein] + ATP = O-phospho-L-tyrosyl-[protein] + ADP + H(+). With respect to regulation, inhibited by phosphorylation of Tyr-531 by leukocyte common antigen and activated by dephosphorylation of this site. In terms of biological role, non-receptor tyrosine-protein kinase that plays a role in many biological processes including regulation of cell growth and survival, cell adhesion, integrin-mediated signaling, cytoskeletal remodeling, cell motility, immune response and axon guidance. Inactive FYN is phosphorylated on its C-terminal tail within the catalytic domain. Following activation by PKA, the protein subsequently associates with PTK2/FAK1, allowing PTK2/FAK1 phosphorylation, activation and targeting to focal adhesions. Involved in the regulation of cell adhesion and motility through phosphorylation of CTNNB1 (beta-catenin) and CTNND1 (delta-catenin). Regulates cytoskeletal remodeling by phosphorylating several proteins including the actin regulator WAS and the microtubule-associated proteins MAP2 and MAPT. Promotes cell survival by phosphorylating AGAP2/PIKE-A and preventing its apoptotic cleavage. Participates in signal transduction pathways that regulate the integrity of the glomerular slit diaphragm (an essential part of the glomerular filter of the kidney) by phosphorylating several slit diaphragm components including NPHS1, KIRREL1 and TRPC6. Plays a role in neural processes by phosphorylating DPYSL2, a multifunctional adapter protein within the central nervous system, ARHGAP32, a regulator for Rho family GTPases implicated in various neural functions, and SNCA, a small pre-synaptic protein. Involved in reelin signaling by mediating phosphorylation of DAB1 following reelin (RELN)-binding to its receptor. Participates in the downstream signaling pathways that lead to T-cell differentiation and proliferation following T-cell receptor (TCR) stimulation. Phosphorylates PTK2B/PYK2 in response to T-cell receptor activation. Also participates in negative feedback regulation of TCR signaling through phosphorylation of PAG1, thereby promoting interaction between PAG1 and CSK and recruitment of CSK to lipid rafts. CSK maintains LCK and FYN in an inactive form. Promotes CD28-induced phosphorylation of VAV1. In mast cells, phosphorylates CLNK after activation of immunoglobulin epsilon receptor signaling. Can also promote CD244-mediated NK cell activation. This Rattus norvegicus (Rat) protein is Tyrosine-protein kinase Fyn.